Here is a 368-residue protein sequence, read N- to C-terminus: UDP-N-acetylglucosamine--N-acetylmuramyl-(pentapeptide) pyrophosphoryl-undecaprenol N-acetylglucosamine transferase (368 aa).

Residues 13-15 (TGG), asparagine 124, arginine 167, serine 195, and glutamine 296 each bind UDP-N-acetyl-alpha-D-glucosamine.

The protein belongs to the glycosyltransferase 28 family. MurG subfamily.

Its subcellular location is the cell inner membrane. The enzyme catalyses di-trans,octa-cis-undecaprenyl diphospho-N-acetyl-alpha-D-muramoyl-L-alanyl-D-glutamyl-meso-2,6-diaminopimeloyl-D-alanyl-D-alanine + UDP-N-acetyl-alpha-D-glucosamine = di-trans,octa-cis-undecaprenyl diphospho-[N-acetyl-alpha-D-glucosaminyl-(1-&gt;4)]-N-acetyl-alpha-D-muramoyl-L-alanyl-D-glutamyl-meso-2,6-diaminopimeloyl-D-alanyl-D-alanine + UDP + H(+). It participates in cell wall biogenesis; peptidoglycan biosynthesis. In terms of biological role, cell wall formation. Catalyzes the transfer of a GlcNAc subunit on undecaprenyl-pyrophosphoryl-MurNAc-pentapeptide (lipid intermediate I) to form undecaprenyl-pyrophosphoryl-MurNAc-(pentapeptide)GlcNAc (lipid intermediate II). This is UDP-N-acetylglucosamine--N-acetylmuramyl-(pentapeptide) pyrophosphoryl-undecaprenol N-acetylglucosamine transferase from Maricaulis maris (strain MCS10) (Caulobacter maris).